Here is a 370-residue protein sequence, read N- to C-terminus: Popeye domain-containing 2 (370 aa).

Transmembrane regions (helical) follow at residues 51–71 and 78–98; these read ALYI…WGWL and VFIW…HLIF. The segment at 275–349 is disordered; the sequence is PSPPGSEGGS…SGEDSTSLIL (75 aa). Low complexity predominate over residues 283–294; the sequence is GSASSPPRGSLG. 2 stretches are compositionally biased toward polar residues: residues 307–319 and 330–347; these read NPGS…QPDQ and QHWS…STSL.

This sequence belongs to the popeye family. As to expression, expressed in the heart and, slightly, in skeletal muscle.

The protein resides in the membrane. The protein localises to the cell membrane. Its subcellular location is the sarcolemma. In terms of biological role, important for striated muscle differentiation and cardiac morphogenesis. Is also required for cardiac conduction system development, plays a regulatory function in heart rate dynamics mediated, at least in part, through cAMP-binding. This chain is Popeye domain-containing 2, found in Danio rerio (Zebrafish).